The following is a 407-amino-acid chain: Multifunctional CCA protein (407 aa).

Glycine 8 and arginine 11 together coordinate ATP. The CTP site is built by glycine 8 and arginine 11. Aspartate 21 and aspartate 23 together coordinate Mg(2+). Arginine 91, arginine 137, and arginine 140 together coordinate ATP. Arginine 91, arginine 137, and arginine 140 together coordinate CTP. The region spanning 228 to 329 is the HD domain; that stretch reads TGIHTLLVAE…VKIFNKLDVW (102 aa).

Belongs to the tRNA nucleotidyltransferase/poly(A) polymerase family. Bacterial CCA-adding enzyme type 1 subfamily. In terms of assembly, monomer. Can also form homodimers and oligomers. It depends on Mg(2+) as a cofactor. Ni(2+) is required as a cofactor.

The catalysed reaction is a tRNA precursor + 2 CTP + ATP = a tRNA with a 3' CCA end + 3 diphosphate. The enzyme catalyses a tRNA with a 3' CCA end + 2 CTP + ATP = a tRNA with a 3' CCACCA end + 3 diphosphate. In terms of biological role, catalyzes the addition and repair of the essential 3'-terminal CCA sequence in tRNAs without using a nucleic acid template. Adds these three nucleotides in the order of C, C, and A to the tRNA nucleotide-73, using CTP and ATP as substrates and producing inorganic pyrophosphate. tRNA 3'-terminal CCA addition is required both for tRNA processing and repair. Also involved in tRNA surveillance by mediating tandem CCA addition to generate a CCACCA at the 3' terminus of unstable tRNAs. While stable tRNAs receive only 3'-terminal CCA, unstable tRNAs are marked with CCACCA and rapidly degraded. This chain is Multifunctional CCA protein, found in Vibrio vulnificus (strain CMCP6).